Consider the following 483-residue polypeptide: Isocitrate dehydrogenase [NADP] (483 aa).

Thr-74 contributes to the NADP(+) binding site. The D-threo-isocitrate site is built by Ser-83, Asn-85, Arg-89, Arg-99, and Arg-121. Asp-232 provides a ligand contact to Mg(2+). Residues 264-270 (HGSAPDI) and Asn-277 each bind NADP(+).

The protein belongs to the isocitrate and isopropylmalate dehydrogenases family. Homodimer. It depends on Mg(2+) as a cofactor. Mn(2+) is required as a cofactor.

It carries out the reaction D-threo-isocitrate + NADP(+) = 2-oxoglutarate + CO2 + NADPH. Catalyzes the oxidative decarboxylation of isocitrate to 2-oxoglutarate and carbon dioxide with the concomitant reduction of NADP(+). The protein is Isocitrate dehydrogenase [NADP] (icd) of Rickettsia felis (strain ATCC VR-1525 / URRWXCal2) (Rickettsia azadi).